We begin with the raw amino-acid sequence, 444 residues long: 4-O-dimethylallyl-L-tyrosine synthase (444 aa).

It belongs to the tryptophan dimethylallyltransferase family. In terms of assembly, homodimer.

It carries out the reaction L-tyrosine + dimethylallyl diphosphate = 4-O-dimethylallyl-L-tyrosine + diphosphate. Functionally, 4-O-dimethylallyl-L-tyrosine synthase; part of the gene cluster that mediates the biosynthesis of an unusual class of epipolythiodioxopiperazines (ETPs) lacking the reactive thiol group important for toxicity. Firstly, L-tyrosine is prenylated by tcpD, before undergoing condensation with L-glycine in a reaction catalyzed by the NRPS tcpP leading to the diketopiperazine (DKP) backbone. Afterwards the alpha-carbon of tyrosine is oxidized by the cytochrome P450 tcpC to form a hydroxyl group. However, in contrast other ETP biosynthesis pathways studied so far, tcpC is not able to bishydroxylate the DKP at both alpha-carbon positions, but hydroxylates the alpha-carbon of the tyrosine part and the nitrogen of the glycine part. The next steps involve an alpha,beta-elimination reaction catalyzed by tcpI, a methylation by the methyltransferase tcpN the action of the four enzyme cascade tcpG/K/J/I. Due to a dysfunctional cytochrome P450 monooxygenase tcpC, the pathway leads to the biosynthesis of probable non-toxic metabolites lacking the reactive thiol group. The chain is 4-O-dimethylallyl-L-tyrosine synthase from Claviceps purpurea (strain 20.1) (Ergot fungus).